A 106-amino-acid chain; its full sequence is UPF0145 protein MA_3383 (106 aa).

Belongs to the UPF0145 family.

This is UPF0145 protein MA_3383 from Methanosarcina acetivorans (strain ATCC 35395 / DSM 2834 / JCM 12185 / C2A).